The chain runs to 346 residues: Glycerol-1-phosphate dehydrogenase [NAD(P)+] (346 aa).

NAD(+)-binding positions include 93–97 and 115–118; these read GSIID and TTAS. Asp120 is a substrate binding site. Ser124 is an NAD(+) binding site. Asp167 contributes to the substrate binding site. Positions 167 and 247 each coordinate Zn(2+). Substrate is bound at residue His251. His263 is a Zn(2+) binding site.

Belongs to the glycerol-1-phosphate dehydrogenase family. Zn(2+) is required as a cofactor.

The protein resides in the cytoplasm. It catalyses the reaction sn-glycerol 1-phosphate + NAD(+) = dihydroxyacetone phosphate + NADH + H(+). The enzyme catalyses sn-glycerol 1-phosphate + NADP(+) = dihydroxyacetone phosphate + NADPH + H(+). Its pathway is membrane lipid metabolism; glycerophospholipid metabolism. Its function is as follows. Catalyzes the NAD(P)H-dependent reduction of dihydroxyacetonephosphate (DHAP or glycerone phosphate) to glycerol 1-phosphate (G1P). The G1P thus generated is used as the glycerophosphate backbone of phospholipids in the cellular membranes of Archaea. This is Glycerol-1-phosphate dehydrogenase [NAD(P)+] from Pyrococcus abyssi (strain GE5 / Orsay).